Reading from the N-terminus, the 394-residue chain is S-adenosylmethionine synthase (394 aa).

His16 is an ATP binding site. Residue Asp18 participates in Mg(2+) binding. Glu44 lines the K(+) pocket. Positions 57 and 100 each coordinate L-methionine. The interval 100–110 is flexible loop; sequence QSPDIAQGVDA. Residues 172–174, 239–240, Asp248, 254–255, Ala271, and Lys275 each bind ATP; these read DAK, RF, and RK. Asp248 is an L-methionine binding site. Lys279 contacts L-methionine.

It belongs to the AdoMet synthase family. As to quaternary structure, homotetramer; dimer of dimers. It depends on Mg(2+) as a cofactor. The cofactor is K(+).

The protein localises to the cytoplasm. The enzyme catalyses L-methionine + ATP + H2O = S-adenosyl-L-methionine + phosphate + diphosphate. It functions in the pathway amino-acid biosynthesis; S-adenosyl-L-methionine biosynthesis; S-adenosyl-L-methionine from L-methionine: step 1/1. In terms of biological role, catalyzes the formation of S-adenosylmethionine (AdoMet) from methionine and ATP. The overall synthetic reaction is composed of two sequential steps, AdoMet formation and the subsequent tripolyphosphate hydrolysis which occurs prior to release of AdoMet from the enzyme. This Enterococcus faecalis (strain ATCC 700802 / V583) protein is S-adenosylmethionine synthase.